We begin with the raw amino-acid sequence, 141 residues long: Acetyltransferase YE1169 (141 aa).

One can recognise an N-acetyltransferase domain in the interval 1-141 (MEIRVFQQSD…GKRLIVDQEY (141 aa)).

Belongs to the acetyltransferase family. YpeA subfamily.

The sequence is that of Acetyltransferase YE1169 from Yersinia enterocolitica serotype O:8 / biotype 1B (strain NCTC 13174 / 8081).